The following is a 64-amino-acid chain: Conotoxin reg3k (64 aa).

The signal sequence occupies residues 1–20 (MMFKLGVLLTICLLLFPLTA). The propeptide occupies 21-48 (LQLDWDQPGDHMLDISSEIDDRWFDPVR). Intrachain disulfides connect C50–C60, C51–C58, and C56–C61. P59 bears the 4-hydroxyproline mark.

Expressed by the venom duct.

The protein localises to the secreted. This is Conotoxin reg3k from Conus regius (Crown cone).